Consider the following 245-residue polypeptide: MIKLVLIRHGQSLWNLENRFTGWTDVDLSENGLSEAREAGAILKKNGYTFDVAYTSVLKRAIRTLWIVLHEMDLAWVPVHKCWKLNERHYGALQGLNKDETAKKYGEEQVHIWRRSIDVRPPALTEDDPRYEMNDLRYKALKKGEFPLTECLVDTEKRVLDYWHSEIAPKLKNGNKVIISSHGNTIRSLVKYLDNLSSDGVVSLNIPTSIPLVYELDENLRPIRHYYLSMDGEVPEGEIPKHITF.

Residues 8–15, 21–22, arginine 60, 87–90, lysine 98, 114–115, and 183–184 each bind substrate; these read RHGQSLWN, TG, ERHY, RR, and GN. The Tele-phosphohistidine intermediate role is filled by histidine 9. The Proton donor/acceptor role is filled by glutamate 87.

It belongs to the phosphoglycerate mutase family. BPG-dependent PGAM subfamily.

The catalysed reaction is (2R)-2-phosphoglycerate = (2R)-3-phosphoglycerate. Its pathway is carbohydrate degradation; glycolysis; pyruvate from D-glyceraldehyde 3-phosphate: step 3/5. In terms of biological role, catalyzes the interconversion of 2-phosphoglycerate and 3-phosphoglycerate. The protein is 2,3-bisphosphoglycerate-dependent phosphoglycerate mutase of Bacillus anthracis (strain A0248).